Consider the following 375-residue polypeptide: Actin, cytoplasmic (375 aa).

Belongs to the actin family.

It is found in the cytoplasm. The protein localises to the cytoskeleton. The catalysed reaction is ATP + H2O = ADP + phosphate + H(+). Its function is as follows. Actins are highly conserved proteins that are involved in various types of cell motility and are ubiquitously expressed in all eukaryotic cells. This Oxytricha trifallax (Sterkiella histriomuscorum) protein is Actin, cytoplasmic.